The sequence spans 446 residues: uncharacterized protein (446 aa).

Disordered regions lie at residues 198 to 233, 309 to 337, and 394 to 431; these read SIQK…ENYS, NEDN…DDSK, and SESV…FGNT. Over residues 199–224 the composition is skewed to low complexity; that stretch reads IQKQIPKQTQEQTQKQTQEQTQESSQ. Positions 317–333 are enriched in acidic residues; it reads DNEEDSDESDIESDSDL. Residues 397 to 418 are compositionally biased toward basic and acidic residues; the sequence is VKSDSNESKSIKPESIKSESIK.

This is an uncharacterized protein from Acanthamoeba polyphaga mimivirus (APMV).